Reading from the N-terminus, the 72-residue chain is Translation initiation factor IF-1 (72 aa).

The region spanning 1–72 (MSKDDVIEMQ…TRGRITWRAK (72 aa)) is the S1-like domain.

This sequence belongs to the IF-1 family. As to quaternary structure, component of the 30S ribosomal translation pre-initiation complex which assembles on the 30S ribosome in the order IF-2 and IF-3, IF-1 and N-formylmethionyl-tRNA(fMet); mRNA recruitment can occur at any time during PIC assembly.

It is found in the cytoplasm. In terms of biological role, one of the essential components for the initiation of protein synthesis. Stabilizes the binding of IF-2 and IF-3 on the 30S subunit to which N-formylmethionyl-tRNA(fMet) subsequently binds. Helps modulate mRNA selection, yielding the 30S pre-initiation complex (PIC). Upon addition of the 50S ribosomal subunit IF-1, IF-2 and IF-3 are released leaving the mature 70S translation initiation complex. This chain is Translation initiation factor IF-1, found in Clostridium botulinum (strain ATCC 19397 / Type A).